Consider the following 1192-residue polypeptide: MEAFEISDFKEHAKKKSMWAGALNKVTISGLMGVFTEDEDLMALPIHRDHCPALLKIFDEIIVNATDHERACHSKTKKVTYIKISFDKGVFSCENDGPGIPIAKHEQASLIAKRDVYVPEVASCHFLAGTNINKAKDCIKGGTNGVGLKLAMVHSQWAILTTADGAQKYVQHINQRLDIIEPPTITPSREMFTRIELMPVYQELGYAEPLSETEQADLSAWIYLRACQCAAYVGKGTTIYYNDKPCRTGSVMALAKMYTLLSAPNSTIHTATIKADAKPYSLHPLQVAAVVSPKFKKFEHVSVINGVNCVKGEHVTFLKKTINEMVVKKFQQTIKDKNRKTTLRDSCSNIFIVIVGSIPGIEWTGQRKDELSIAENVFKTHYSIPSSFLTSMTKSIVDILLQSISKKDNHKQVDVDKYTRARNAGGKRAQDCMLLAAEGDSALSLLRTGLTLGKSNPSGPSFDFCGMISLGGVIMNACKKVTNITTDSGETIMVRNEQLTNNKVLQGIVQVLGLDFNCHYKTQEERAKLRYGCIVACVDQDLDGCGKILGLLLAYFHLFWPQLIIHGFVKRLLTPLIRVYEKGKTVPVEFYYEQEFDAWAKKQTSLANHTVKYYKGLAAHDTHEVKSMFKHFDNMVYTFTLDDSAKELFHIYFGGESELRKRELCTGVVPLTETQTQSIHSVRRIPCSLHLQVDTKAYKLDAIERQIPNFLDGMTRARRKILAGGVKCFASNNRERKVFQFGGYVADHMFYHHGDMSLNTSIIKAAQYYPGSSHLYPVFIGIGSFGSRHLGGKDAGSPRYISVQLASEFIKTMFPAEDSWLLPYVFEDGQRAEPEYYVPVLPLAIMEYGANPSEGWKYTTWARQLEDILALVRAYVDKNNPKHELLHYAIKHKITILPLRPSNYNFKGHLKRFGQYYYSYGTYVISEQRNIITITELPLRVPTVAYIESIKKSSNRMTFIEEIIDYSSSETIEILVKLKPNSLNRIMEEFKCTEEQDSIENFLRLRNCLHSHLNFVKPKGGIIEFNTYYEILYAWLPYRRELYQKRLMREHAVLKLRIIMETAIVRYINESAELNLSHYEDEKEASRILSEHGFPPLNQTLIISPEFASIEELNQKALQGCYTYILSLQARELLIAAKTRRVEKIKKMQARLDKVEQLLQESPFPGASVWLEEIDAVEKAIIKGRNTQWKFH.

Residues asparagine 64, asparagine 95, and 142 to 149 (GTNGVGLK) each bind ATP. Mg(2+) contacts are provided by glutamate 438, aspartate 539, and aspartate 541. In terms of domain architecture, Topo IIA-type catalytic spans 707–1174 (IPNFLDGMTR…PGASVWLEEI (468 aa)). Tyrosine 800 acts as the O-(5'-phospho-DNA)-tyrosine intermediate in catalysis.

The protein belongs to the type II topoisomerase family. The cofactor is Mg(2+). Mn(2+) serves as cofactor. Requires Ca(2+) as cofactor.

Its subcellular location is the host cytoplasm. It carries out the reaction ATP-dependent breakage, passage and rejoining of double-stranded DNA.. Functionally, type II topoisomerase. Processively relaxes supercoiled DNA. Displays DNA-supercoiling activity only when associated with the viral histone-like protein. The sequence is that of DNA topoisomerase 2 from African swine fever virus (isolate Tick/South Africa/Pretoriuskop Pr4/1996) (ASFV).